Reading from the N-terminus, the 211-residue chain is Acyl-homoserine-lactone synthase (211 aa).

This sequence belongs to the autoinducer synthase family.

The catalysed reaction is a fatty acyl-[ACP] + S-adenosyl-L-methionine = an N-acyl-L-homoserine lactone + S-methyl-5'-thioadenosine + holo-[ACP] + H(+). Its function is as follows. Required for the synthesis of OHHL (N-(3-oxohexanoyl)-L-homoserine lactone), an autoinducer molecule which binds to TraR and thus acts in the control of conjugal transfer. This is Acyl-homoserine-lactone synthase (traI) from Agrobacterium fabrum (strain C58 / ATCC 33970) (Agrobacterium tumefaciens (strain C58)).